The primary structure comprises 247 residues: Probable transcriptional regulatory protein LAF_0541 (247 aa).

The tract at residues 1-22 (MSGHSKWHNIQGRKNAQDAKRG) is disordered.

Belongs to the TACO1 family.

It is found in the cytoplasm. The protein is Probable transcriptional regulatory protein LAF_0541 of Limosilactobacillus fermentum (strain NBRC 3956 / LMG 18251) (Lactobacillus fermentum).